The primary structure comprises 180 residues: uncharacterized protein (180 aa).

Positions 1-180 constitute a Macro domain; the sequence is MVEFEIVKGD…KDYERALRAV (180 aa).

This is an uncharacterized protein from Thermococcus kodakarensis (strain ATCC BAA-918 / JCM 12380 / KOD1) (Pyrococcus kodakaraensis (strain KOD1)).